The sequence spans 445 residues: C-terminal-binding protein 2 (445 aa).

Arginine 22 carries the post-translational modification Asymmetric dimethylarginine. Residues serine 106, 186-191 (IGFGRT), aspartate 210, 243-249 (CNLNEHN), 270-272 (AAR), and aspartate 296 contribute to the NAD(+) site. Arginine 272 is a catalytic residue. Glutamate 301 is an active-site residue. The Proton donor role is filled by histidine 321. NAD(+) is bound at residue 321–324 (HTAW). Residues 414-445 (THNLPTVAHPSQAPSPNQPTKHGDNREHPNEQ) are disordered. Serine 428 bears the Phosphoserine; by HIPK2 mark. The span at 434–445 (KHGDNREHPNEQ) shows a compositional bias: basic and acidic residues.

It belongs to the D-isomer specific 2-hydroxyacid dehydrogenase family. As to quaternary structure, interacts with HIPK2 and PNN. Interacts with the transcription factors ZNF217, BKLF, delta EF1/AREB6/ZEB, EVI-1 and Friend of GATA (FOG) via the consensus motif P-X-[DNS]-L-[STVA]. Also interacts with the C-terminus of adenovirus E1A protein. Can form a complex with BKLF on a CACCC-box oligonucleotide. Can form homodimers or heterodimers of CTBP1 and CTBP2. Interacts with NRIP1 and WIZ. Interacts with PRDM16; represses white adipose tissue (WAT)-specific genes expression. Interacts with MCRIP1. Post-translationally, phosphorylation by HIPK2 on Ser-428 induces proteasomal degradation. As to expression, found in all tissues except spleen and liver.

It is found in the nucleus. It localises to the synapse. Corepressor targeting diverse transcription regulators. Isoform 2 probably acts as a scaffold for specialized synapses. Functions in brown adipose tissue (BAT) differentiation. In Mus musculus (Mouse), this protein is C-terminal-binding protein 2 (Ctbp2).